A 134-amino-acid polypeptide reads, in one-letter code: Small ribosomal subunit protein uS8c (134 aa).

This sequence belongs to the universal ribosomal protein uS8 family. As to quaternary structure, part of the 30S ribosomal subunit.

It localises to the plastid. The protein localises to the chloroplast. In terms of biological role, one of the primary rRNA binding proteins, it binds directly to 16S rRNA central domain where it helps coordinate assembly of the platform of the 30S subunit. This chain is Small ribosomal subunit protein uS8c (rps8), found in Cucumis sativus (Cucumber).